The following is a 683-amino-acid chain: Outer dynein arm-docking complex subunit 4 (683 aa).

4 TPR repeats span residues 13 to 46 (FPSY…QSGD), 47 to 80 (KNCL…DPTF), 48 to 80 (NCLV…DPTF), and 81 to 114 (CKGI…RPDR). Positions 158 to 179 (QQKPHPVRQLIHHPKRESKRKG) are disordered. Basic residues predominate over residues 167-179 (LIHHPKRESKRKG). TPR repeat units lie at residues 275–311 (LKSL…NKEE), 320–353 (GNLY…AKEY), 360–393 (SRAL…AKTT), 397–430 (TWLF…AEEE), and 437–470 (LNAS…AKLV). 2 disordered regions span residues 510-537 (ENAT…PEKV) and 553-683 (VLSK…EPIE). Composition is skewed to basic and acidic residues over residues 521–537 (TAKE…PEKV), 566–590 (PEQR…ERGP), 602–620 (GRTE…RPSE), and 629–675 (SSPR…IEKD). A TPR 15 repeat occupies 592–625 (DTAKGQFGEAGRTEQNREETREIYRRPSELDQNL).

As to quaternary structure, component of the outer dynein arm-docking complex along with ODAD1, ODAD2 and ODAD3. Interacts with ODAD1; this interaction may facilitate the recruitment and/or attachment of outer dynein arm docking complex proteins, including ODAD1, ODAD3 and ODAD2, to ciliary axonemes. Interacts with components of the IFT complex A, including IFT140, TTC21B/IFT139 and WDR19/IFT144, and the IFT complex B, including IFT46, IFT52 and IFT57. Interacts with CFAP53. Expressed in trachea multiciliated cells.

Its subcellular location is the cytoplasm. The protein resides in the cytoskeleton. It localises to the cilium axoneme. In terms of biological role, component of the outer dynein arm-docking complex (ODA-DC) that mediates outer dynein arms (ODA) binding onto the doublet microtubule. Plays an essential role for the assembly of ODA-DC and for the docking of ODA in ciliary axoneme. This chain is Outer dynein arm-docking complex subunit 4, found in Bos taurus (Bovine).